Consider the following 1465-residue polypeptide: DNA polymerase alpha catalytic subunit (1465 aa).

2 disordered regions span residues 20–39 and 105–135; these read GSFA…GRQE and LEDD…PSVT. The segment covering 26–35 has biased composition (basic residues); it reads RARREKKSKK. T180 is subject to Phosphothreonine. Phosphoserine is present on residues S192 and S215. K230 is subject to N6-acetyllysine. The disordered stretch occupies residues 261–297; it reads DESMDTEKVDEKPVTAKTWDQETEPVERVEHEADPER. 2 stretches are compositionally biased toward basic and acidic residues: residues 265–274 and 285–297; these read DTEKVDEKPV and PVER…DPER. The segment at 654–719 is DNA-binding; sequence RINECKVPYW…YHLSELVQQI (66 aa). At K974 the chain carries N6-succinyllysine. The interval 1249–1380 is DNA-binding; the sequence is QFRVHQYHKD…NGPLCPVCMK (132 aa). Residues C1287, C1290, C1314, C1319, C1352, C1357, C1375, and C1378 each contribute to the Zn(2+) site. The CysA-type zinc-finger motif lies at 1287–1317; it reads CPSCGTENIYDNVFEGSGLDMEPSLYRCSNV. A CysB motif motif is present at residues 1352 to 1378; the sequence is CEEPTCCSRLRRLPLHFSRNGPLCPVC.

Belongs to the DNA polymerase type-B family. Component of the alpha DNA polymerase complex (also known as the alpha DNA polymerase-primase complex) consisting of four subunits: the catalytic subunit POLA1, the regulatory subunit POLA2, and the primase complex subunits PRIM1 and PRIM2 respectively. Within the complex, POLA1 directly interacts with PRIM2. Interacts with PARP1; this interaction functions as part of the control of replication fork progression. Interacts with MCM10 and WDHD1; these interactions recruit the polymerase alpha complex to the pre-replicative complex bound to DNA. Interacts with RPA1; this interaction stabilizes the replicative complex and reduces the misincorporation rate of DNA polymerase alpha by acting as a fidelity clamp. In terms of tissue distribution, expressed in those zones containing proliferating cells in the developing embryonic neocortex, as well as in the lateral and medial ganglionic eminences. After birth, expressed in cells that remain proliferating in the ventricular and subventricular zone of the striatum.

The protein resides in the nucleus. Its subcellular location is the cytoplasm. It is found in the cytosol. The enzyme catalyses DNA(n) + a 2'-deoxyribonucleoside 5'-triphosphate = DNA(n+1) + diphosphate. Catalytic subunit of the DNA polymerase alpha complex (also known as the alpha DNA polymerase-primase complex) which plays an essential role in the initiation of DNA synthesis. During the S phase of the cell cycle, the DNA polymerase alpha complex (composed of a catalytic subunit POLA1, a regulatory subunit POLA2 and two primase subunits PRIM1 and PRIM2) is recruited to DNA at the replicative forks via direct interactions with MCM10 and WDHD1. The primase subunit of the polymerase alpha complex initiates DNA synthesis by oligomerising short RNA primers on both leading and lagging strands. These primers are initially extended by the polymerase alpha catalytic subunit and subsequently transferred to polymerase delta and polymerase epsilon for processive synthesis on the lagging and leading strand, respectively. The reason this transfer occurs is because the polymerase alpha has limited processivity and lacks intrinsic 3' exonuclease activity for proofreading error, and therefore is not well suited for replicating long complexes. In the cytosol, responsible for a substantial proportion of the physiological concentration of cytosolic RNA:DNA hybrids, which are necessary to prevent spontaneous activation of type I interferon responses. The chain is DNA polymerase alpha catalytic subunit (Pola1) from Mus musculus (Mouse).